The chain runs to 129 residues: Cocaine- and amphetamine-regulated transcript protein (129 aa).

An N-terminal signal peptide occupies residues 1–27; that stretch reads MESSRLRLLPVLGAALLLLLPLLGAGA. Residue Tyr-41 is modified to Phosphotyrosine. Ser-48 is modified (phosphoserine). 3 disulfide bridges follow: Cys-95–Cys-113, Cys-101–Cys-121, and Cys-115–Cys-128.

It belongs to the CART family. As to expression, neuroendocrine tissues. Predominantly expressed in the hypothalamus, pituitary, and longitudinal muscle-myenteric plexus. Abundant expression is also seen in the midbrain/thalamus and eye. A lower level expression is seen in the other brain regions and adrenal.

The protein localises to the secreted. Functionally, satiety factor closely associated with the actions of leptin and neuropeptide y; this anorectic peptide inhibits both normal and starvation-induced feeding and completely blocks the feeding response induced by neuropeptide Y and regulated by leptin in the hypothalamus. In Rattus norvegicus (Rat), this protein is Cocaine- and amphetamine-regulated transcript protein (Cartpt).